Reading from the N-terminus, the 360-residue chain is Protein RecA (360 aa).

Residue 69–76 participates in ATP binding; sequence GPESSGKT.

Belongs to the RecA family.

Its subcellular location is the cytoplasm. In terms of biological role, can catalyze the hydrolysis of ATP in the presence of single-stranded DNA, the ATP-dependent uptake of single-stranded DNA by duplex DNA, and the ATP-dependent hybridization of homologous single-stranded DNAs. It interacts with LexA causing its activation and leading to its autocatalytic cleavage. The polypeptide is Protein RecA (Trichodesmium erythraeum (strain IMS101)).